The sequence spans 283 residues: MRQYLDLCQRIVDEGVWLENQRTGKRCLTVINADLTYNAAANEFPIITTRKSYWKAAIAEFLGYIRGYDNAADFRKLGAKTWDANANENQAWLNNPVRKGVDDMGRVYGVQGRAWRKPNGETVDQLRKIVDDLSRGIDDRGEILTFLNPGEFDLGCLRPCMYSHTFSLLGDTLYLTSYQRSCDVPLGLNFNQIQVFTFLALMAQITGKKPGQAYHKIVNAHIYEDQLDLMRDVQLKRRPFPSPRLEINPDIKTLEDLETWVTLDDFNVVGYECHEPIKYPFSV.

Arginine 22 is a dUMP binding site. The active-site Nucleophile is cysteine 160. DUMP contacts are provided by residues 180–183 (RSCD), asparagine 191, and 221–223 (HIY). A (6R)-5,10-methylene-5,6,7,8-tetrahydrofolate-binding site is contributed by aspartate 183. (6R)-5,10-methylene-5,6,7,8-tetrahydrofolate is bound at residue serine 282.

This sequence belongs to the thymidylate synthase family. Bacterial-type ThyA subfamily. As to quaternary structure, homodimer.

The protein localises to the cytoplasm. It carries out the reaction dUMP + (6R)-5,10-methylene-5,6,7,8-tetrahydrofolate = 7,8-dihydrofolate + dTMP. It functions in the pathway pyrimidine metabolism; dTTP biosynthesis. Catalyzes the reductive methylation of 2'-deoxyuridine-5'-monophosphate (dUMP) to 2'-deoxythymidine-5'-monophosphate (dTMP) while utilizing 5,10-methylenetetrahydrofolate (mTHF) as the methyl donor and reductant in the reaction, yielding dihydrofolate (DHF) as a by-product. This enzymatic reaction provides an intracellular de novo source of dTMP, an essential precursor for DNA biosynthesis. This chain is Thymidylate synthase, found in Actinobacillus succinogenes (strain ATCC 55618 / DSM 22257 / CCUG 43843 / 130Z).